The primary structure comprises 164 residues: Phosphopantetheine adenylyltransferase (164 aa).

Ser-9 is a binding site for substrate. Residues 9 to 10 (SF) and His-17 contribute to the ATP site. 3 residues coordinate substrate: Lys-41, Val-78, and Arg-92. ATP-binding positions include 93–95 (GLR), Glu-103, and 128–134 (VRTITAT).

Belongs to the bacterial CoaD family. As to quaternary structure, homohexamer. Requires Mg(2+) as cofactor.

The protein localises to the cytoplasm. The enzyme catalyses (R)-4'-phosphopantetheine + ATP + H(+) = 3'-dephospho-CoA + diphosphate. It functions in the pathway cofactor biosynthesis; coenzyme A biosynthesis; CoA from (R)-pantothenate: step 4/5. Functionally, reversibly transfers an adenylyl group from ATP to 4'-phosphopantetheine, yielding dephospho-CoA (dPCoA) and pyrophosphate. In Brucella suis (strain ATCC 23445 / NCTC 10510), this protein is Phosphopantetheine adenylyltransferase.